Here is a 1209-residue protein sequence, read N- to C-terminus: Calcium-activated potassium channel subunit alpha-1 (1209 aa).

Residues 1–23 show a composition bias toward gly residues; that stretch reads MANGGGGGGGSSGGGGGGGGGSG. Positions 1 to 61 are disordered; it reads MANGGGGGGG…SSSSSSSSSV (61 aa). The Extracellular portion of the chain corresponds to 1-86; sequence MANGGGGGGG…VPCDSRGQRM (86 aa). A compositionally biased stretch (polar residues) spans 25–39; it reads RMSSNIHANNLSLDA. Low complexity predominate over residues 40–60; the sequence is SSSSSSSSSSSSSSSSSSSSS. A helical transmembrane segment spans residues 87 to 107; that stretch reads WWAFLASSMVTFFGGLFIILL. Residues 108-178 are Cytoplasmic-facing; it reads WRTLKYLWTV…MISAQTLTGR (71 aa). S-palmitoyl cysteine attachment occurs at residues Cys118, Cys119, and Cys121. The helical transmembrane segment at 179-199 threads the bilayer; the sequence is VLVVLVFALSIGALVIYFIDS. Residues 200–214 are Extracellular-facing; sequence SNPIESCQNFYKDFT. The chain crosses the membrane as a helical span at residues 215–235; it reads LQIDMAFNVFFLLYFGLRFIA. Residues 236–239 lie on the Cytoplasmic side of the membrane; that stretch reads ANDK. Residues 240-260 traverse the membrane as a helical segment; that stretch reads LWFWLEVNSVVDFFTVPPVFV. Residues 261–264 lie on the Extracellular side of the membrane; it reads SVYL. A helical; Voltage-sensor membrane pass occupies residues 265–285; the sequence is NRSWLGLRFLRALRLIQFSEI. At 286–300 the chain is on the cytoplasmic side; sequence LQFLNILKTSNSIKL. Residues 301-321 form a helical membrane-spanning segment; sequence VNLLSIFISTWLTAAGFIHLV. Topologically, residues 322–335 are extracellular; that stretch reads ENSGDPWENFQNNQ. The segment at residues 336-358 is an intramembrane region (pore-forming); sequence ALTYWECVYLLMVTMSTVGYGDV. The short motif at 352–355 is the Selectivity for potassium element; that stretch reads TVGY. Topologically, residues 359–367 are extracellular; the sequence is YAKTTLGRL. The helical transmembrane segment at 368–388 threads the bilayer; sequence FMVFFILGGLAMFASYVPEII. Residues 389 to 1209 lie on the Cytoplasmic side of the membrane; that stretch reads ELIGNRKKYG…KQNRKEMVYR (821 aa). An RCK N-terminal 1 domain is found at 407–549; it reads RKHIVVCGHI…WNWKEGDDAI (143 aa). Residues Glu439, Gln462, and Glu464 each coordinate Mg(2+). A segment S7 region spans residues 556 to 576; the sequence is LGFIAQSCLAQGLSTMLANLF. Residues 613 to 633 are segment S8; sequence LSFPTVCELCFVKLKLLMIAI. Position 670 is a phosphothreonine (Asp670). Lys672 is subject to Phosphoserine. A heme-binding motif region spans residues 681–685; it reads CKACH. Residues 703-733 form a disordered region; sequence EDEQPPTLSPKKKQRNGGMRNSPNTSPKLMR. Thr709 carries the post-translational modification Phosphothreonine. Phosphoserine is present on residues Ser711, Ser724, and Ser728. Positions 783 to 803 are segment S9; it reads VLSGHVVVCIFGDVSSALIGL. An RCK N-terminal 2 domain is found at 785-929; that stretch reads SGHVVVCIFG…MDRSSPDNSP (145 aa). Thr916 is subject to Phosphothreonine. Phosphoserine occurs at positions 924 and 928. Positions 976–998 match the Calcium bowl motif; sequence TELVNDTNVQFLDQDDDDDPDTE. Residues Gln985, Asp988, Asp991, and Asp993 each contribute to the Ca(2+) site. The interval 1005–1025 is segment S10; it reads FACGTAFAVSVLDSLMSATYF. Residues 1159-1184 show a composition bias toward low complexity; sequence RASLSHSSHSSQSSSKKSSSVHSIPS. Residues 1159–1209 are disordered; it reads RASLSHSSHSSQSSSKKSSSVHSIPSTANRPNRPKSRESRDKQNRKEMVYR. Residues 1193 to 1209 are compositionally biased toward basic and acidic residues; it reads KSRESRDKQNRKEMVYR. Phosphoserine is present on residues Ser1194 and Ser1197.

Belongs to the potassium channel family. Calcium-activated (TC 1.A.1.3) subfamily. KCa1.1/KCNMA1 sub-subfamily. Homotetramer; which constitutes the calcium-activated potassium channel. Interacts with beta subunits KCNMB1, KCNMB2, KCNMB3 and KCNMB4. Interacts with gamma subunits LRRC26, LRRC38, LRRC52 and LRRC55. Beta and gamma subunits are accessory, and modulate its activity. Interacts with RAB11B. Phosphorylated. Phosphorylation by kinases such as PKA and/or PKG. In smooth muscles, phosphorylation affects its activity. In terms of processing, palmitoylation by ZDHHC22 and ZDHHC23 within the intracellular linker between the S0 and S1 transmembrane domains regulates localization to the plasma membrane. Depalmitoylated by LYPLA1 and LYPLAL1, leading to retard exit from the trans-Golgi network.

It is found in the cell membrane. It catalyses the reaction K(+)(in) = K(+)(out). Its activity is regulated as follows. Ethanol and carbon monoxide-bound heme increase channel activation. Heme inhibits channel activation. Potassium channel activated by both membrane depolarization or increase in cytosolic Ca(2+) that mediates export of K(+). It is also activated by the concentration of cytosolic Mg(2+). Its activation dampens the excitatory events that elevate the cytosolic Ca(2+) concentration and/or depolarize the cell membrane. It therefore contributes to repolarization of the membrane potential. Plays a key role in controlling excitability in a number of systems, such as regulation of the contraction of smooth muscle, the tuning of hair cells in the cochlea, regulation of transmitter release, and innate immunity. In smooth muscles, its activation by high level of Ca(2+), caused by ryanodine receptors in the sarcoplasmic reticulum, regulates the membrane potential. In cochlea cells, its number and kinetic properties partly determine the characteristic frequency of each hair cell and thereby helps to establish a tonotopic map. Kinetics of KCNMA1 channels are determined by alternative splicing, phosphorylation status and its combination with modulating beta subunits. Highly sensitive to both iberiotoxin (IbTx) and charybdotoxin (CTX). Functionally, potassium channel activated by both membrane depolarization or increase in cytosolic Ca(2+) that mediates export of K(+). The protein is Calcium-activated potassium channel subunit alpha-1 (Kcnma1) of Mus musculus (Mouse).